The chain runs to 521 residues: Cytochrome P450 1A1 (521 aa).

Phe229 is a substrate binding site. Cys463 contacts heme.

Belongs to the cytochrome P450 family. It depends on heme as a cofactor.

Its subcellular location is the endoplasmic reticulum membrane. It localises to the microsome membrane. It catalyses the reaction an organic molecule + reduced [NADPH--hemoprotein reductase] + O2 = an alcohol + oxidized [NADPH--hemoprotein reductase] + H2O + H(+). Functionally, cytochromes P450 are a group of heme-thiolate monooxygenases. They oxidize a variety of structurally unrelated compounds, including steroids, fatty acids, and xenobiotics. This chain is Cytochrome P450 1A1 (cyp1a1), found in Chelon auratus (Golden grey mullet).